Reading from the N-terminus, the 347-residue chain is Heat-inducible transcription repressor HrcA (347 aa).

The protein belongs to the HrcA family.

Negative regulator of class I heat shock genes (grpE-dnaK-dnaJ and groELS operons). Prevents heat-shock induction of these operons. The chain is Heat-inducible transcription repressor HrcA from Mycoplasmopsis pulmonis (strain UAB CTIP) (Mycoplasma pulmonis).